A 464-amino-acid polypeptide reads, in one-letter code: Opioid growth factor receptor-like protein 1 (464 aa).

Disordered stretches follow at residues Met-1–Lys-91 and Glu-309–Gly-464. Positions Gln-43–Gly-59 are enriched in basic and acidic residues. The span at Ala-74–Gly-86 shows a compositional bias: low complexity. The segment covering Pro-316–Lys-325 has biased composition (basic and acidic residues). Positions Gln-327–Ser-342 are enriched in polar residues. 3 stretches are compositionally biased toward basic and acidic residues: residues Ser-363–Ser-382, Pro-390–Ala-400, and Ser-425–Glu-439. Over residues Ala-452 to Gly-464 the composition is skewed to polar residues.

Belongs to the opioid growth factor receptor family.

The polypeptide is Opioid growth factor receptor-like protein 1 (Ogfrl1) (Mus musculus (Mouse)).